A 110-amino-acid chain; its full sequence is Eukaryotic translation initiation factor eIF1 (110 aa).

Thr-40 carries the post-translational modification Phosphothreonine.

This sequence belongs to the SUI1 family.

In terms of biological role, probably involved in translation. The polypeptide is Eukaryotic translation initiation factor eIF1 (Drosophila melanogaster (Fruit fly)).